The chain runs to 380 residues: Queuine tRNA-ribosyltransferase (380 aa).

D96 serves as the catalytic Proton acceptor. Substrate contacts are provided by residues 96–100 (DSGGF), D150, Q193, and G220. Residues 251–257 (GVGAPDS) are RNA binding. D270 serves as the catalytic Nucleophile. An RNA binding; important for wobble base 34 recognition region spans residues 275–279 (TRIAR). Residues C308, C310, C313, and H339 each coordinate Zn(2+).

Belongs to the queuine tRNA-ribosyltransferase family. As to quaternary structure, homodimer. Within each dimer, one monomer is responsible for RNA recognition and catalysis, while the other monomer binds to the replacement base PreQ1. Requires Zn(2+) as cofactor.

The enzyme catalyses 7-aminomethyl-7-carbaguanine + guanosine(34) in tRNA = 7-aminomethyl-7-carbaguanosine(34) in tRNA + guanine. The protein operates within tRNA modification; tRNA-queuosine biosynthesis. Catalyzes the base-exchange of a guanine (G) residue with the queuine precursor 7-aminomethyl-7-deazaguanine (PreQ1) at position 34 (anticodon wobble position) in tRNAs with GU(N) anticodons (tRNA-Asp, -Asn, -His and -Tyr). Catalysis occurs through a double-displacement mechanism. The nucleophile active site attacks the C1' of nucleotide 34 to detach the guanine base from the RNA, forming a covalent enzyme-RNA intermediate. The proton acceptor active site deprotonates the incoming PreQ1, allowing a nucleophilic attack on the C1' of the ribose to form the product. After dissociation, two additional enzymatic reactions on the tRNA convert PreQ1 to queuine (Q), resulting in the hypermodified nucleoside queuosine (7-(((4,5-cis-dihydroxy-2-cyclopenten-1-yl)amino)methyl)-7-deazaguanosine). The protein is Queuine tRNA-ribosyltransferase of Streptococcus thermophilus (strain ATCC BAA-250 / LMG 18311).